Reading from the N-terminus, the 335-residue chain is Glucokinase (335 aa).

11–16 lines the ATP pocket; it reads ADIGGT.

The protein belongs to the bacterial glucokinase family.

It is found in the cytoplasm. The enzyme catalyses D-glucose + ATP = D-glucose 6-phosphate + ADP + H(+). This chain is Glucokinase, found in Xanthomonas axonopodis pv. citri (strain 306).